A 36-amino-acid polypeptide reads, in one-letter code: Photosystem I reaction center subunit VIII (36 aa).

The chain crosses the membrane as a helical span at residues 10–29 (FVPLVGLVFPAIAMASLFLY).

This sequence belongs to the PsaI family.

Its subcellular location is the plastid. The protein localises to the chloroplast thylakoid membrane. Its function is as follows. May help in the organization of the PsaL subunit. The polypeptide is Photosystem I reaction center subunit VIII (Oryza nivara (Indian wild rice)).